The primary structure comprises 63 residues: Overexpressed in colon carcinoma 1 protein homolog (63 aa).

Residues 1–12 show a composition bias toward low complexity; sequence MGCGNSTAASAG. The tract at residues 1 to 40 is disordered; sequence MGCGNSTAASAGAGQGPAGAAKDVTEESITEDDKRRNYGG.

It belongs to the OCC1 family.

The chain is Overexpressed in colon carcinoma 1 protein homolog from Bos taurus (Bovine).